A 194-amino-acid polypeptide reads, in one-letter code: Flagellin A2 (194 aa).

The propeptide occupies 1 to 12 (MFEFITDEDERG).

It belongs to the archaeal flagellin family. In terms of processing, glycosylated.

Its subcellular location is the archaeal flagellum. In terms of biological role, flagellin is the subunit protein which polymerizes to form the filaments of archaeal flagella. The polypeptide is Flagellin A2 (flaA2) (Halobacterium salinarum (strain ATCC 700922 / JCM 11081 / NRC-1) (Halobacterium halobium)).